The sequence spans 318 residues: L-lactate dehydrogenase (318 aa).

NAD(+) contacts are provided by Val16, Asp37, and Tyr69. Substrate is bound by residues Gln86, Arg92, and 124–127; that span reads NPVD. NAD(+) is bound by residues 122–124 and Ser147; that span reads ASN. Residue 152 to 155 coordinates substrate; it reads DSAR. Residue His179 is the Proton acceptor of the active site. The residue at position 223 (Tyr223) is a Phosphotyrosine. Thr232 serves as a coordination point for substrate.

This sequence belongs to the LDH/MDH superfamily. LDH family. Homotetramer.

It is found in the cytoplasm. It catalyses the reaction (S)-lactate + NAD(+) = pyruvate + NADH + H(+). The protein operates within fermentation; pyruvate fermentation to lactate; (S)-lactate from pyruvate: step 1/1. Its function is as follows. Catalyzes the conversion of lactate to pyruvate. In Mycoplasma mycoides subsp. mycoides SC (strain CCUG 32753 / NCTC 10114 / PG1), this protein is L-lactate dehydrogenase.